A 189-amino-acid chain; its full sequence is ATP synthase subunit b (189 aa).

The helical transmembrane segment at 7–27 (LLIAALAVAPLAHAAEGGFVG) threads the bilayer.

It belongs to the ATPase B chain family. In terms of assembly, F-type ATPases have 2 components, F(1) - the catalytic core - and F(0) - the membrane proton channel. F(1) has five subunits: alpha(3), beta(3), gamma(1), delta(1), epsilon(1). F(0) has three main subunits: a(1), b(2) and c(10-14). The alpha and beta chains form an alternating ring which encloses part of the gamma chain. F(1) is attached to F(0) by a central stalk formed by the gamma and epsilon chains, while a peripheral stalk is formed by the delta and b chains.

Its subcellular location is the cell inner membrane. In terms of biological role, f(1)F(0) ATP synthase produces ATP from ADP in the presence of a proton or sodium gradient. F-type ATPases consist of two structural domains, F(1) containing the extramembraneous catalytic core and F(0) containing the membrane proton channel, linked together by a central stalk and a peripheral stalk. During catalysis, ATP synthesis in the catalytic domain of F(1) is coupled via a rotary mechanism of the central stalk subunits to proton translocation. Its function is as follows. Component of the F(0) channel, it forms part of the peripheral stalk, linking F(1) to F(0). The polypeptide is ATP synthase subunit b (Hyphomonas neptunium (strain ATCC 15444)).